We begin with the raw amino-acid sequence, 448 residues long: Protein TraN (448 aa).

Disordered stretches follow at residues 243 to 273 (NRVGASRTATTARAGQQQSPAVKQSSGNSGE) and 411 to 448 (EAARRHQALMRKQEQEKKQAQERERGRSQSLGLSNKPS). Over residues 246-261 (GASRTATTARAGQQQS) the composition is skewed to low complexity. Residues 262–271 (PAVKQSSGNS) show a composition bias toward polar residues. A compositionally biased stretch (basic and acidic residues) spans 421 to 437 (RKQEQEKKQAQERERGR). Polar residues predominate over residues 438 to 448 (SQSLGLSNKPS).

It to H.influenzae HI_1407.

This is Protein TraN (traN) from Escherichia coli.